Reading from the N-terminus, the 557-residue chain is Formate--tetrahydrofolate ligase (557 aa).

65 to 72 (TPAGEGKT) contributes to the ATP binding site.

It belongs to the formate--tetrahydrofolate ligase family.

It catalyses the reaction (6S)-5,6,7,8-tetrahydrofolate + formate + ATP = (6R)-10-formyltetrahydrofolate + ADP + phosphate. Its pathway is one-carbon metabolism; tetrahydrofolate interconversion. This is Formate--tetrahydrofolate ligase from Methylobacterium radiotolerans (strain ATCC 27329 / DSM 1819 / JCM 2831 / NBRC 15690 / NCIMB 10815 / 0-1).